Consider the following 101-residue polypeptide: Urease subunit beta (101 aa).

The protein belongs to the urease beta subunit family. Heterotrimer of UreA (gamma), UreB (beta) and UreC (alpha) subunits. Three heterotrimers associate to form the active enzyme.

The protein resides in the cytoplasm. It carries out the reaction urea + 2 H2O + H(+) = hydrogencarbonate + 2 NH4(+). It participates in nitrogen metabolism; urea degradation; CO(2) and NH(3) from urea (urease route): step 1/1. The polypeptide is Urease subunit beta (Ectopseudomonas mendocina (strain ymp) (Pseudomonas mendocina)).